The chain runs to 213 residues: Phosphatidylserine decarboxylase proenzyme (213 aa).

Serine 180 acts as the Schiff-base intermediate with substrate; via pyruvic acid in catalysis. Serine 180 is subject to Pyruvic acid (Ser); by autocatalysis.

The protein belongs to the phosphatidylserine decarboxylase family. PSD-A subfamily. As to quaternary structure, heterodimer of a large membrane-associated beta subunit and a small pyruvoyl-containing alpha subunit. Pyruvate serves as cofactor. Post-translationally, is synthesized initially as an inactive proenzyme. Formation of the active enzyme involves a self-maturation process in which the active site pyruvoyl group is generated from an internal serine residue via an autocatalytic post-translational modification. Two non-identical subunits are generated from the proenzyme in this reaction, and the pyruvate is formed at the N-terminus of the alpha chain, which is derived from the carboxyl end of the proenzyme. The post-translation cleavage follows an unusual pathway, termed non-hydrolytic serinolysis, in which the side chain hydroxyl group of the serine supplies its oxygen atom to form the C-terminus of the beta chain, while the remainder of the serine residue undergoes an oxidative deamination to produce ammonia and the pyruvoyl prosthetic group on the alpha chain.

The protein resides in the cell membrane. It catalyses the reaction a 1,2-diacyl-sn-glycero-3-phospho-L-serine + H(+) = a 1,2-diacyl-sn-glycero-3-phosphoethanolamine + CO2. It participates in phospholipid metabolism; phosphatidylethanolamine biosynthesis; phosphatidylethanolamine from CDP-diacylglycerol: step 2/2. In terms of biological role, catalyzes the formation of phosphatidylethanolamine (PtdEtn) from phosphatidylserine (PtdSer). The polypeptide is Phosphatidylserine decarboxylase proenzyme (Carboxydothermus hydrogenoformans (strain ATCC BAA-161 / DSM 6008 / Z-2901)).